The following is a 672-amino-acid chain: Forkhead box protein O3 (672 aa).

2 disordered regions span residues methionine 1 to serine 85 and glycine 110 to arginine 152. The residue at position 30 (serine 30) is a Phosphoserine. At threonine 32 the chain carries Phosphothreonine. The residue at position 46 (lysine 46) is an N6-methyllysine. A compositionally biased stretch (acidic residues) spans isoleucine 57–aspartate 68. Residues glycine 80–glycine 108 are required for mitochondrial import. Low complexity predominate over residues glycine 110–glutamine 129. Lysine 148 bears the N6-methyllysine mark. The fork-head DNA-binding region spans tryptophan 156–alanine 250. The residue at position 178 (threonine 178) is a Phosphothreonine. Phosphoserine is present on residues serine 208 and serine 214. Residue lysine 229 is modified to N6-methyllysine. The tract at residues serine 230–glutamate 301 is disordered. The residue at position 241 (lysine 241) is an N6-acetyllysine. The Nuclear localization signal motif lies at lysine 241–lysine 258. The residue at position 252 (serine 252) is a Phosphoserine. Residues threonine 260 to alanine 271 are compositionally biased toward basic residues. N6-methyllysine is present on residues lysine 261 and lysine 270. Residues serine 279 and serine 283 each carry the phosphoserine modification. Positions aspartate 282 to arginine 297 are enriched in polar residues. Residue lysine 289 is modified to N6-methyllysine. A Phosphoserine modification is found at serine 293. The residue at position 298 (serine 298) is a Phosphoserine; by CaMK2A. The interval serine 299–glycine 672 is mediates interaction with CHUK/IKKA and IKBKB/IKKB. Serine 310 is modified (phosphoserine). The residue at position 314 (serine 314) is a Phosphoserine; by SGK1. 2 positions are modified to phosphoserine; by AMPK: serine 398 and serine 412. Disordered regions lie at residues glutamine 399 to serine 441 and histidine 535 to serine 583. Composition is skewed to polar residues over residues arginine 409–serine 441 and alanine 548–glutamine 577. Position 418 is an N6-methyllysine (lysine 418). Residue serine 420 is modified to Phosphoserine. Phosphoserine; by MAPKAPK5 is present on serine 550. The residue at position 554 (serine 554) is a Phosphoserine; by AMPK and MAPKAPK5. Phosphoserine; by AMPK is present on residues serine 587 and serine 625. Serine 643 bears the Phosphoserine; by IKKB mark.

As to quaternary structure, upon metabolic stress, forms a complex composed of FOXO3, SIRT3 and mitochondrial RNA polymerase POLRMT; the complex is recruited to mtDNA in a SIRT3-dependent manner. Also forms a complex composed of FOXO3, SIRT3, TFAM and POLRMT. Interacts with SIRT2; the interaction occurs independently of SIRT2 deacetylase activity. Interacts with YWHAB/14-3-3-beta and YWHAZ/14-3-3-zeta, which are required for cytosolic sequestration. Upon oxidative stress, interacts with STK4/MST1, which disrupts interaction with YWHAB/14-3-3-beta and leads to nuclear translocation. Interacts with PIM1. Interacts with DDIT3/CHOP. Interacts (deacetylated form) with SKP2. Interacts with CHUK and IKBKB. Interacts with CAMK2A, CAMK2B and calcineurin A. Interacts with NUPR1; this interaction represses FOXO3 transactivation. Post-translationally, deacetylation by SIRT1 or SIRT2 stimulates interaction of FOXO3 with SKP2 and facilitates SCF(SKP2)-mediated FOXO3 ubiquitination and proteasomal degradation. Deacetylation by SIRT2 stimulates FOXO3-mediated transcriptional activity in response to oxidative stress. Deacetylated by SIRT3. Deacetylation by SIRT3 stimulates FOXO3-mediated mtDNA transcriptional activity in response to metabolic stress. In terms of processing, in the presence of survival factors such as IGF1, phosphorylated on Thr-32 and Ser-252 by AKT1/PKB. This phosphorylated form then interacts with 14-3-3 proteins and is retained in the cytoplasm. Survival factor withdrawal induces dephosphorylation and promotes translocation to the nucleus where the dephosphorylated protein induces transcription of target genes and triggers apoptosis. Although AKT1/PKB doesn't appear to phosphorylate Ser-314 directly, it may activate other kinases that trigger phosphorylation at this residue. Phosphorylated by STK4/MST1 on Ser-208 upon oxidative stress, which leads to dissociation from YWHAB/14-3-3-beta and nuclear translocation. Phosphorylated by PIM1. Phosphorylation by AMPK leads to the activation of transcriptional activity without affecting subcellular localization. Phosphorylated by AMPK on Ser-30 in response to metabolic stress which mediates FOXO3 mitochondrial translocation. Phosphorylation by MAPKAPK5 promotes nuclear localization and DNA-binding, leading to induction of miR-34b and miR-34c expression, 2 post-transcriptional regulators of MYC that bind to the 3'UTR of MYC transcript and prevent its translation. Phosphorylated by CHUK/IKKA and IKBKB/IKKB. TNF-induced inactivation of FOXO3 requires its phosphorylation at Ser-643 by IKBKB/IKKB which promotes FOXO3 retention in the cytoplasm, polyubiquitination and ubiquitin-mediated proteasomal degradation. May be dephosphorylated by calcineurin A on Ser-298 which abolishes FOXO3 transcriptional activity. Phosphorylation at Ser-252 promotes its degradation by the proteasome. Dephosphorylation at Ser-252 by protein phosphatase 2A (PPP2CA) promotes its stabilization; interaction with PPP2CA is enhanced by AMBRA1. Heavily methylated by SET9 which decreases stability, while moderately increasing transcriptional activity. The main methylation site is Lys-270. Methylation doesn't affect subcellular location. Post-translationally, polyubiquitinated. Ubiquitinated by a SCF complex containing SKP2, leading to proteasomal degradation. In terms of processing, the N-terminus is cleaved following import into the mitochondrion. As to expression, expressed in white and brown adipose tissues (at protein level). Expressed in liver, kidney, lung and colon (at protein level). Expressed in skeletal muscles (at protein level).

It is found in the cytoplasm. The protein localises to the cytosol. It localises to the nucleus. Its subcellular location is the mitochondrion matrix. The protein resides in the mitochondrion outer membrane. Transcriptional activator that recognizes and binds to the DNA sequence 5'-[AG]TAAA[TC]A-3' and regulates different processes, such as apoptosis and autophagy. Acts as a positive regulator of autophagy in skeletal muscle: in starved cells, enters the nucleus following dephosphorylation and binds the promoters of autophagy genes, such as GABARAP1L, MAP1LC3B and ATG12, thereby activating their expression, resulting in proteolysis of skeletal muscle proteins. Triggers apoptosis in the absence of survival factors, including neuronal cell death upon oxidative stress. Participates in post-transcriptional regulation of MYC: following phosphorylation by MAPKAPK5, promotes induction of miR-34b and miR-34c expression, 2 post-transcriptional regulators of MYC that bind to the 3'UTR of MYC transcript and prevent its translation. In response to metabolic stress, translocates into the mitochondria where it promotes mtDNA transcription. Also acts as a key regulator of chondrogenic commitment of skeletal progenitor cells in response to lipid availability: when lipids levels are low, translocates to the nucleus and promotes expression of SOX9, which induces chondrogenic commitment and suppresses fatty acid oxidation. Also acts as a key regulator of regulatory T-cells (Treg) differentiation by activating expression of FOXP3. This is Forkhead box protein O3 from Mus musculus (Mouse).